We begin with the raw amino-acid sequence, 535 residues long: Thermosome subunit gamma (535 aa).

It belongs to the TCP-1 chaperonin family. As to quaternary structure, forms a Heterooligomeric complex of two stacked eight-membered rings.

Molecular chaperone; binds unfolded polypeptides in vitro, and has a weak ATPase activity. The polypeptide is Thermosome subunit gamma (thsC) (Saccharolobus solfataricus (strain ATCC 35092 / DSM 1617 / JCM 11322 / P2) (Sulfolobus solfataricus)).